The chain runs to 639 residues: Threonine--tRNA ligase (639 aa).

Residues 1–61 (MIHITLPDGS…TQDSPLSIVT (61 aa)) form the TGS domain. The tract at residues 242 to 533 (DHRKLGRELD…LIEEHAGALP (292 aa)) is catalytic. The Zn(2+) site is built by cysteine 333, histidine 384, and histidine 510.

The protein belongs to the class-II aminoacyl-tRNA synthetase family. In terms of assembly, homodimer. Zn(2+) serves as cofactor.

It localises to the cytoplasm. It catalyses the reaction tRNA(Thr) + L-threonine + ATP = L-threonyl-tRNA(Thr) + AMP + diphosphate + H(+). In terms of biological role, catalyzes the attachment of threonine to tRNA(Thr) in a two-step reaction: L-threonine is first activated by ATP to form Thr-AMP and then transferred to the acceptor end of tRNA(Thr). Also edits incorrectly charged L-seryl-tRNA(Thr). In Acidovorax ebreus (strain TPSY) (Diaphorobacter sp. (strain TPSY)), this protein is Threonine--tRNA ligase.